We begin with the raw amino-acid sequence, 322 residues long: ATP-dependent 6-phosphofructokinase (322 aa).

Gly13 is an ATP binding site. Position 23-27 (23-27) interacts with ADP; sequence RAVVR. ATP-binding positions include 74–75 and 104–107; these read RC and GDGS. Asp105 serves as a coordination point for Mg(2+). 127–129 provides a ligand contact to substrate; it reads TID. Asp129 (proton acceptor) is an active-site residue. Residue Arg156 participates in ADP binding. Residues Arg164 and 171–173 contribute to the substrate site; that span reads MGR. ADP-binding positions include 187–189 and 215–217; these read GAE and KRH. Residues Glu224, Arg246, and 252–255 contribute to the substrate site; that span reads HIQR.

Belongs to the phosphofructokinase type A (PFKA) family. ATP-dependent PFK group I subfamily. Prokaryotic clade 'B1' sub-subfamily. As to quaternary structure, homotetramer. Mg(2+) serves as cofactor.

It is found in the cytoplasm. The enzyme catalyses beta-D-fructose 6-phosphate + ATP = beta-D-fructose 1,6-bisphosphate + ADP + H(+). The protein operates within carbohydrate degradation; glycolysis; D-glyceraldehyde 3-phosphate and glycerone phosphate from D-glucose: step 3/4. Its activity is regulated as follows. Allosterically activated by ADP and other diphosphonucleosides, and allosterically inhibited by phosphoenolpyruvate. In terms of biological role, catalyzes the phosphorylation of D-fructose 6-phosphate to fructose 1,6-bisphosphate by ATP, the first committing step of glycolysis. This is ATP-dependent 6-phosphofructokinase from Paenibacillus macquariensis (Bacillus macquariensis).